We begin with the raw amino-acid sequence, 424 residues long: 5-methylthioadenosine/S-adenosylhomocysteine deaminase (424 aa).

Zn(2+)-binding residues include His60 and His62. The substrate site is built by Glu89 and His181. His208 is a binding site for Zn(2+). Glu211 and Asp296 together coordinate substrate. Asp296 is a Zn(2+) binding site.

Belongs to the metallo-dependent hydrolases superfamily. MTA/SAH deaminase family. Zn(2+) is required as a cofactor.

The enzyme catalyses S-adenosyl-L-homocysteine + H2O + H(+) = S-inosyl-L-homocysteine + NH4(+). It catalyses the reaction S-methyl-5'-thioadenosine + H2O + H(+) = S-methyl-5'-thioinosine + NH4(+). In terms of biological role, catalyzes the deamination of 5-methylthioadenosine and S-adenosyl-L-homocysteine into 5-methylthioinosine and S-inosyl-L-homocysteine, respectively. Is also able to deaminate adenosine. This Thermococcus onnurineus (strain NA1) protein is 5-methylthioadenosine/S-adenosylhomocysteine deaminase.